Here is a 224-residue protein sequence, read N- to C-terminus: Glutathione S-transferase U4 (224 aa).

In terms of domain architecture, GST N-terminal spans 6 to 85 (EDVKLLGFWA…YIDQIWKNNP (80 aa)). Glutathione-binding positions include 16-17 (SP), 42-43 (NK), 56-57 (KV), and 69-70 (ES). Residues 90–217 (DPYEKAMALF…EEQIEHMKKV (128 aa)) enclose the GST C-terminal domain. A Phosphothreonine modification is found at Thr151.

This sequence belongs to the GST superfamily. Tau family.

Its subcellular location is the cytoplasm. The protein localises to the cytosol. It catalyses the reaction RX + glutathione = an S-substituted glutathione + a halide anion + H(+). Its function is as follows. May be involved in the conjugation of reduced glutathione to a wide number of exogenous and endogenous hydrophobic electrophiles and have a detoxification role against certain herbicides. The polypeptide is Glutathione S-transferase U4 (GSTU4) (Arabidopsis thaliana (Mouse-ear cress)).